A 339-amino-acid chain; its full sequence is UDP-glucose 4-epimerase (339 aa).

NAD(+)-binding positions include 10–12, 31–35, 58–59, phenylalanine 80, and lysine 84; these read GYI, DNLSN, and DL. Residue 124–126 coordinates substrate; it reads SAT. Residue tyrosine 148 is the Proton acceptor of the active site. Residues lysine 152 and tyrosine 176 each coordinate NAD(+). Substrate contacts are provided by residues 176 to 178, 197 to 199, arginine 230, and 291 to 294; these read YFN, NNL, and RPGD.

The protein belongs to the NAD(P)-dependent epimerase/dehydratase family. Requires NAD(+) as cofactor.

It catalyses the reaction UDP-alpha-D-glucose = UDP-alpha-D-galactose. It carries out the reaction UDP-N-acetyl-alpha-D-glucosamine = UDP-N-acetyl-alpha-D-galactosamine. The protein operates within cell wall biogenesis; teichoic acid biosynthesis. Functionally, catalyzes two distinct but analogous reactions: the reversible epimerization of UDP-glucose to UDP-galactose and the reversible epimerization of UDP-N-acetylglucosamine to UDP-N-acetylgalactosamine. The enzyme is more efficient in catalyzing the interconversion between unacetylated than between corresponding N-acetylated substrates. Essential for growth in media containing either glucose or galactose. May protect the cell from the toxic effects of galactose and glucose or derivatives of both sugars. Involved in the biosynthesis of teichoic acids via the formation of UDP-N-acetylgalactosamine. Influences cell division. The polypeptide is UDP-glucose 4-epimerase (Bacillus subtilis (strain 168)).